The following is a 231-amino-acid chain: Sec-independent protein translocase protein TatB (231 aa).

Residues 1-21 (MFDIGFSELLLFGVIALIVLG) form a helical membrane-spanning segment. The tract at residues 77–168 (MRREMAEMRG…SLKTDFNDNA (92 aa)) is disordered. Positions 101–111 (ASRDLVDDAKP) are enriched in basic and acidic residues. Polar residues predominate over residues 148 to 157 (SEQPSAQGDN).

This sequence belongs to the TatB family. The Tat system comprises two distinct complexes: a TatABC complex, containing multiple copies of TatA, TatB and TatC subunits, and a separate TatA complex, containing only TatA subunits. Substrates initially bind to the TatABC complex, which probably triggers association of the separate TatA complex to form the active translocon.

It localises to the cell inner membrane. Part of the twin-arginine translocation (Tat) system that transports large folded proteins containing a characteristic twin-arginine motif in their signal peptide across membranes. Together with TatC, TatB is part of a receptor directly interacting with Tat signal peptides. TatB may form an oligomeric binding site that transiently accommodates folded Tat precursor proteins before their translocation. The sequence is that of Sec-independent protein translocase protein TatB from Psychrobacter cryohalolentis (strain ATCC BAA-1226 / DSM 17306 / VKM B-2378 / K5).